Consider the following 270-residue polypeptide: Putative phosphoenolpyruvate synthase regulatory protein (270 aa).

ADP is bound at residue 150 to 157; sequence GVSRCGKT.

Belongs to the pyruvate, phosphate/water dikinase regulatory protein family. PSRP subfamily.

The enzyme catalyses [pyruvate, water dikinase] + ADP = [pyruvate, water dikinase]-phosphate + AMP + H(+). It catalyses the reaction [pyruvate, water dikinase]-phosphate + phosphate + H(+) = [pyruvate, water dikinase] + diphosphate. Bifunctional serine/threonine kinase and phosphorylase involved in the regulation of the phosphoenolpyruvate synthase (PEPS) by catalyzing its phosphorylation/dephosphorylation. The protein is Putative phosphoenolpyruvate synthase regulatory protein of Shewanella sp. (strain ANA-3).